We begin with the raw amino-acid sequence, 542 residues long: Phenylacetone monooxygenase (542 aa).

FAD is bound by residues serine 27, glutamate 46, 54–57 (VWYW), aspartate 66, tyrosine 72, valine 119, and glutamine 152. Residue 64-66 (RCD) participates in NADP(+) binding. NADP(+) is bound by residues 194-200 (TGSSGIQ), 217-218 (RT), and 336-337 (KR). Methionine 446 contacts FAD. Tryptophan 501 is a binding site for NADP(+).

The protein belongs to the FAD-binding monooxygenase family. As to quaternary structure, monomer. It depends on FAD as a cofactor.

It catalyses the reaction phenylacetone + NADPH + O2 + H(+) = benzyl acetate + NADP(+) + H2O. Functionally, catalyzes a Baeyer-Villiger oxidation reaction, i.e. the insertion of an oxygen atom into a carbon-carbon bond adjacent to a carbonyl, which converts ketones to esters. Is most efficient with phenylacetone as substrate, leading to the formation of benzyl acetate. Can also oxidize other aromatic ketones (benzylacetone, alpha-methylphenylacetone and 4-hydroxyacetophenone), some aliphatic ketones (dodecan-2-one and bicyclohept-2-en-6-one) and sulfides (e.g. methyl 4-tolylsulfide). The sequence is that of Phenylacetone monooxygenase (pamO) from Thermobifida fusca (strain YX).